The sequence spans 402 residues: Nicotinate phosphoribosyltransferase (402 aa).

The residue at position 224 (H224) is a Phosphohistidine; by autocatalysis.

The protein belongs to the NAPRTase family. In terms of processing, transiently phosphorylated on a His residue during the reaction cycle. Phosphorylation strongly increases the affinity for substrates and increases the rate of nicotinate D-ribonucleotide production. Dephosphorylation regenerates the low-affinity form of the enzyme, leading to product release.

It carries out the reaction nicotinate + 5-phospho-alpha-D-ribose 1-diphosphate + ATP + H2O = nicotinate beta-D-ribonucleotide + ADP + phosphate + diphosphate. It participates in cofactor biosynthesis; NAD(+) biosynthesis; nicotinate D-ribonucleotide from nicotinate: step 1/1. In terms of biological role, catalyzes the synthesis of beta-nicotinate D-ribonucleotide from nicotinate and 5-phospho-D-ribose 1-phosphate at the expense of ATP. The polypeptide is Nicotinate phosphoribosyltransferase (Neisseria meningitidis serogroup C (strain 053442)).